Reading from the N-terminus, the 306-residue chain is Peroxisome biogenesis factor 10 (306 aa).

The Peroxisomal matrix portion of the chain corresponds to 1-52; the sequence is MHLSAHIDPLQIILCTEIDEACIQFIKSQIEGIARACGPRMQANFEGVLIPY. A helical transmembrane segment spans residues 53 to 84; the sequence is VDVLGKFLYRACCLRYATMGEEAARIVLAKQD. The Cytoplasmic segment spans residues 85 to 147; the sequence is RSKGLVLATT…PEAVISKEKH (63 aa). Residues 148–174 traverse the membrane as a helical segment; the sequence is LVYILNSFKPILLKLVSIIRFLCLTMK. The Peroxisomal matrix portion of the chain corresponds to 175 to 202; that stretch reads GHCATVSQLLLGLKYISLDEINPEEKKK. A helical membrane pass occupies residues 203–219; sequence VLTLLLLLGSRLIASIL. Residues 220-306 lie on the Cytoplasmic side of the membrane; it reads QHSNSYFDQH…SSPSKIILLR (87 aa). Cys256, Cys259, Cys271, His273, Cys276, Cys279, Cys290, and Cys293 together coordinate Zn(2+). Residues 256 to 294 form an RING-type zinc finger; the sequence is CSLCMEFIHCPAATECGHIFCWSCINGWTSKKSECPLCR.

The protein belongs to the pex2/pex10/pex12 family. As to quaternary structure, component of the PEX2-PEX10-PEX12 retrotranslocation channel, composed of PEX2, PEX10 and PEX12.

Its subcellular location is the peroxisome membrane. It carries out the reaction S-ubiquitinyl-[E2 ubiquitin-conjugating enzyme]-L-cysteine + [acceptor protein]-L-lysine = [E2 ubiquitin-conjugating enzyme]-L-cysteine + N(6)-ubiquitinyl-[acceptor protein]-L-lysine.. It functions in the pathway protein modification; protein ubiquitination. Its activity is regulated as follows. The E3 ubiquitin-protein ligase activity is stimulated by PEX12. Functionally, E3 ubiquitin-protein ligase component of a retrotranslocation channel required for peroxisome organization by mediating export of the PEX5 receptor from peroxisomes to the cytosol, thereby promoting PEX5 recycling. The retrotranslocation channel is composed of PEX2, PEX10 and PEX12; each subunit contributing transmembrane segments that coassemble into an open channel that specifically allows the passage of PEX5 through the peroxisomal membrane. PEX10 also regulates PEX5 recycling by acting as a E3 ubiquitin-protein ligase. When PEX5 recycling is compromised, PEX10 catalyzes polyubiquitination of PEX5 during its passage through the retrotranslocation channel, leading to its degradation. The polypeptide is Peroxisome biogenesis factor 10 (pas4) (Schizosaccharomyces pombe (strain 972 / ATCC 24843) (Fission yeast)).